Here is a 293-residue protein sequence, read N- to C-terminus: tRNA pseudouridine synthase B (293 aa).

D39 acts as the Nucleophile in catalysis.

This sequence belongs to the pseudouridine synthase TruB family. Type 1 subfamily.

The enzyme catalyses uridine(55) in tRNA = pseudouridine(55) in tRNA. Functionally, responsible for synthesis of pseudouridine from uracil-55 in the psi GC loop of transfer RNAs. The polypeptide is tRNA pseudouridine synthase B (Streptococcus thermophilus (strain CNRZ 1066)).